The primary structure comprises 249 residues: Small ribosomal subunit protein uS2 (249 aa).

It belongs to the universal ribosomal protein uS2 family.

The chain is Small ribosomal subunit protein uS2 from Listeria monocytogenes serovar 1/2a (strain ATCC BAA-679 / EGD-e).